The primary structure comprises 290 residues: Putative neuropeptide Y receptor type 6 (290 aa).

Topologically, residues 1-39 (MEVSLNHPASNTTSTKNNNSAFFYFESCQPPSPALLLLC) are extracellular. Residue N11 is glycosylated (N-linked (GlcNAc...) asparagine). A helical transmembrane segment spans residues 40-60 (IAYTVVLIVGLFGNLSLIIII). Residues 61–83 (FKKQRKAQNFTSILIANLSLSDT) are Cytoplasmic-facing. The chain crosses the membrane as a helical span at residues 84-104 (LVCVMCIHFTIIYTLMDHWIF). The Extracellular segment spans residues 105-111 (GDTMCRL). The cysteines at positions 109 and 196 are disulfide-linked. Residues 112–132 (TSYVQSVSISVSIFSLVFTAV) traverse the membrane as a helical segment. Residues 133–150 (ERYQLIVNPRGWKPSVTH) are Cytoplasmic-facing. Residues 151–171 (AYWGITLIWLFSLLLSIPFFL) form a helical membrane-spanning segment. Over 172-206 (SYHLTDEPFRNLSLPTDLYTHQVACVENWPSKKDR) the chain is Extracellular. Residues 207 to 227 (LLFTTSLFLLQYFVPLGFILI) traverse the membrane as a helical segment. Residues 228–258 (CYLKIVICLRRRNAKVDKKKENEGRLNENKR) lie on the Cytoplasmic side of the membrane. The chain crosses the membrane as a helical span at residues 259-279 (INTMLISIVVTFGACWLPRIS). At 280-290 (SMSSLTGIMRC) the chain is on the extracellular side.

Belongs to the G-protein coupled receptor 1 family. Expressed in heart, skeletal muscle, gastrointestinal tissues, spleen, brain and adrenal glands.

The protein localises to the membrane. Functionally, when expressed, is unable to bind pancreatic polypeptide (PP), neuropeptide Y (NPY), or peptide YY (PYY), suggesting that either it is functionally inactive or that it may have acquired a pancreatic polypeptide-independent function. The protein is Putative neuropeptide Y receptor type 6 (NPY6R) of Homo sapiens (Human).